The chain runs to 177 residues: Ribonuclease alpha-sarcin (177 aa).

A signal peptide spans 1–27 (MVAIKNLVLVALTAVTALAVPSPLEAR). 2 disulfide bridges follow: Cys-33/Cys-175 and Cys-103/Cys-159. His-77 is a catalytic residue. Positions 86–119 (DGKLPKGRTPIKFGKSDCDRPPKHSKDGNGKTDH) are disordered. The span at 99–119 (GKSDCDRPPKHSKDGNGKTDH) shows a compositional bias: basic and acidic residues. Glu-123 acts as the Proton acceptor in catalysis. His-164 serves as the catalytic Proton donor.

It belongs to the ribonuclease U2 family.

It localises to the secreted. It carries out the reaction a 28S rRNA containing guanosine-adenosine pair + H2O = an [RNA fragment]-3'-adenosine-3'-phosphate + a 5'-a hydroxy-guanosine-3'-[RNA fragment].. In terms of biological role, alpha-sarcin is specific for purines in both single- and double-stranded RNA. Its toxic action on eukaryotic cells is the result of cleavage of a single phosphodiester bond in the 60S subunit of ribosomes. Inhibits both the EFl (elongation factor 1)-dependent binding of aminoacyl-tRNA and the GTP-dependent binding of EF2 (elongation factor 2) to ribosomes. This is Ribonuclease alpha-sarcin (sar) from Aspergillus giganteus.